Here is a 66-residue protein sequence, read N- to C-terminus: Large ribosomal subunit protein bL32 (66 aa).

This sequence belongs to the bacterial ribosomal protein bL32 family.

In Rickettsia canadensis (strain McKiel), this protein is Large ribosomal subunit protein bL32.